A 155-amino-acid polypeptide reads, in one-letter code: S-ribosylhomocysteine lyase (155 aa).

H53, H57, and C121 together coordinate Fe cation.

The protein belongs to the LuxS family. As to quaternary structure, homodimer. Requires Fe cation as cofactor.

It catalyses the reaction S-(5-deoxy-D-ribos-5-yl)-L-homocysteine = (S)-4,5-dihydroxypentane-2,3-dione + L-homocysteine. Involved in the synthesis of autoinducer 2 (AI-2) which is secreted by bacteria and is used to communicate both the cell density and the metabolic potential of the environment. The regulation of gene expression in response to changes in cell density is called quorum sensing. Catalyzes the transformation of S-ribosylhomocysteine (RHC) to homocysteine (HC) and 4,5-dihydroxy-2,3-pentadione (DPD). This is S-ribosylhomocysteine lyase from Thermus thermophilus (strain ATCC BAA-163 / DSM 7039 / HB27).